A 96-amino-acid chain; its full sequence is MPGKIAVEVAYALPEKQYLQRVTLQEGATVEEAIRASGLLELRTDIDLTKNKVGIYSRPAKLSDTVHDGDRVEIYRPLIADPKELRRQRAEKSANK.

The protein belongs to the UPF0125 (RnfH) family.

This Escherichia coli O17:K52:H18 (strain UMN026 / ExPEC) protein is Protein RnfH.